Reading from the N-terminus, the 146-residue chain is MLVLIQRASQAAVHVDDEVVGQIGPGLLALVGMEPGDTEAQLQRMAERLLGYRVFADEAGKMNRSLRDTGGGLLLVSQFTLAADTRSGMRPSFTSAAPPAEAEQGFNRFVEICRENHAPGVETGRFGAHMVVSLVNDGPVTFLLRP.

The Gly-cisPro motif, important for rejection of L-amino acids motif lies at G138 to P139.

The protein belongs to the DTD family. In terms of assembly, homodimer.

The protein localises to the cytoplasm. It carries out the reaction glycyl-tRNA(Ala) + H2O = tRNA(Ala) + glycine + H(+). It catalyses the reaction a D-aminoacyl-tRNA + H2O = a tRNA + a D-alpha-amino acid + H(+). Functionally, an aminoacyl-tRNA editing enzyme that deacylates mischarged D-aminoacyl-tRNAs. Also deacylates mischarged glycyl-tRNA(Ala), protecting cells against glycine mischarging by AlaRS. Acts via tRNA-based rather than protein-based catalysis; rejects L-amino acids rather than detecting D-amino acids in the active site. By recycling D-aminoacyl-tRNA to D-amino acids and free tRNA molecules, this enzyme counteracts the toxicity associated with the formation of D-aminoacyl-tRNA entities in vivo and helps enforce protein L-homochirality. The polypeptide is D-aminoacyl-tRNA deacylase (Stenotrophomonas maltophilia (strain R551-3)).